A 554-amino-acid polypeptide reads, in one-letter code: Urocanate hydratase (554 aa).

NAD(+) contacts are provided by residues 51 to 52 (GG), Gln-129, 175 to 177 (GMG), Glu-195, Arg-200, 241 to 242 (NA), 262 to 266 (QTSAH), 272 to 273 (YL), and Tyr-321. Residue Cys-409 is part of the active site. Gly-491 serves as a coordination point for NAD(+).

The protein belongs to the urocanase family. NAD(+) is required as a cofactor.

The protein resides in the cytoplasm. It catalyses the reaction 4-imidazolone-5-propanoate = trans-urocanate + H2O. The protein operates within amino-acid degradation; L-histidine degradation into L-glutamate; N-formimidoyl-L-glutamate from L-histidine: step 2/3. In terms of biological role, catalyzes the conversion of urocanate to 4-imidazolone-5-propionate. This Caulobacter sp. (strain K31) protein is Urocanate hydratase.